The primary structure comprises 444 residues: Acyl-CoA 6-desaturase (444 aa).

The disordered stretch occupies residues 1-21; the sequence is MGKGGNQGEGSTERQAPMPTF. The Cytoplasmic portion of the chain corresponds to 1 to 130; it reads MGKGGNQGEG…EDMNLFKTNH (130 aa). Residues 18–95 enclose the Cytochrome b5 heme-binding domain; sequence MPTFRWEEIQ…LKPLLIGELA (78 aa). A helical membrane pass occupies residues 131-151; the sequence is LFFFLLLSHIIVMESLAWFIL. Residue serine 152 is a topological domain, lumenal. A helical transmembrane segment spans residues 153–173; sequence YFGTGWIPTLVTAFVLATSQA. Residues 174–264 are Cytoplasmic-facing; it reads QAGWLQHDYG…KYLPYNHQHE (91 aa). Residues 180 to 184 carry the Histidine box-1 motif; sequence HDYGH. The short motif at 217-221 is the Histidine box-2 element; sequence HFQHH. A helical membrane pass occupies residues 265–285; the sequence is YFFLIGPPLLIPMYFQYQIIM. Residues 286 to 305 are Lumenal-facing; the sequence is TMISRRDWVDLAWAISYYMR. The helical transmembrane segment at 306–326 threads the bilayer; that stretch reads FFYTYIPFYGILGALVFLNFI. At 327 to 444 the chain is on the cytoplasmic side; that stretch reads RFLESHWFVW…ELWLDAYLHK (118 aa). A Histidine box-3 motif is present at residues 382–386; it reads QIEHH.

This sequence belongs to the fatty acid desaturase type 1 family. In terms of tissue distribution, highly expressed in the adrenal gland, liver, brain, and testis, tissues where lipogenesis and steroidogenesis are active. Also detected in lung, heart, and skeletal muscle.

Its subcellular location is the endoplasmic reticulum membrane. The catalysed reaction is (9Z,12Z)-octadecadienoyl-CoA + 2 Fe(II)-[cytochrome b5] + O2 + 2 H(+) = (6Z,9Z,12Z)-octadecatrienoyl-CoA + 2 Fe(III)-[cytochrome b5] + 2 H2O. The enzyme catalyses (9Z,12Z,15Z)-octadecatrienoyl-CoA + 2 Fe(II)-[cytochrome b5] + O2 + 2 H(+) = (6Z,9Z,12Z,15Z)-octadecatetraenoyl-CoA + 2 Fe(III)-[cytochrome b5] + 2 H2O. It catalyses the reaction (9Z,12Z,15Z,18Z,21Z)-tetracosapentaenoyl-CoA + 2 Fe(II)-[cytochrome b5] + O2 + 2 H(+) = (6Z,9Z,12Z,15Z,18Z,21Z)-tetracosahexaenoyl-CoA + 2 Fe(III)-[cytochrome b5] + 2 H2O. It carries out the reaction (11E)-octadecenoyl-CoA + 2 Fe(II)-[cytochrome b5] + O2 + 2 H(+) = (6Z,11E)-octadecadienoyl-CoA + 2 Fe(III)-[cytochrome b5] + 2 H2O. The catalysed reaction is (11Z,14Z)-eicosadienoyl-CoA + 2 Fe(II)-[cytochrome b5] + O2 + 2 H(+) = (8Z,11Z,14Z)-eicosatrienoyl-CoA + 2 Fe(III)-[cytochrome b5] + 2 H2O. The enzyme catalyses (11Z,14Z,17Z)-eicosatrienoyl-CoA + 2 Fe(II)-[cytochrome b5] + O2 + 2 H(+) = (8Z,11Z,14Z,17Z)-eicosatetraenoyl-CoA + 2 Fe(III)-[cytochrome b5] + 2 H2O. It functions in the pathway lipid metabolism; polyunsaturated fatty acid biosynthesis. In terms of biological role, involved in the biosynthesis of highly unsaturated fatty acids (HUFA) from the essential polyunsaturated fatty acids (PUFA) linoleic acid (LA) (18:2n-6) and alpha-linolenic acid (ALA) (18:3n-3) precursors, acting as a fatty acyl-coenzyme A (CoA) desaturase that introduces a cis double bond at carbon 6 of the fatty acyl chain. Catalyzes the first and rate limiting step in this pathway which is the desaturation of LA (18:2n-6) and ALA (18:3n-3) into gamma-linoleate (GLA) (18:3n-6) and stearidonate (18:4n-3), respectively. Subsequently, in the biosynthetic pathway of HUFA n-3 series, it desaturates tetracosapentaenoate (24:5n-3) to tetracosahexaenoate (24:6n-3), which is then converted to docosahexaenoate (DHA)(22:6n-3), an important lipid for nervous system function. It can also desaturate (11E)-octadecenoate (trans-vaccenoate) at carbon 6 generating (6Z,11E)-octadecadienoate. In addition to Delta-6 activity, this enzyme exhibits Delta-8 activity with slight biases toward n-3 fatty acyl-CoA substrates. This Mus musculus (Mouse) protein is Acyl-CoA 6-desaturase.